We begin with the raw amino-acid sequence, 34 residues long: U2-theraphotoxin-Bs1a (34 aa).

3 cysteine pairs are disulfide-bonded: cysteine 2-cysteine 16, cysteine 9-cysteine 21, and cysteine 15-cysteine 28.

As to expression, expressed by the venom gland.

It is found in the secreted. The sequence is that of U2-theraphotoxin-Bs1a from Brachypelma smithi (Mexican red knee tarantula).